Reading from the N-terminus, the 751-residue chain is CCR4-NOT transcription complex subunit 3 (751 aa).

The interval A240 to A534 is disordered. Positions S257–S268 are enriched in low complexity. Positions D284–D293 are enriched in basic and acidic residues. T292 carries the post-translational modification Phosphothreonine. The segment covering S294–Q315 has biased composition (polar residues). S299 carries the phosphoserine modification. Over residues P317 to T330 the composition is skewed to pro residues. Residues G339 to A348 are compositionally biased toward polar residues. A compositionally biased stretch (low complexity) spans S441–S450. Residues A463 to T472 are compositionally biased toward polar residues. Residues A473–L498 are compositionally biased toward low complexity. S540 carries the phosphoserine modification. The segment at E659–Q751 is repressor domain.

Belongs to the CNOT2/3/5 family. In terms of assembly, component of the CCR4-NOT complex; distinct complexes seem to exist that differ in the participation of probably mutually exclusive catalytic subunits. In the complex interacts directly with CNOT2. Interacts with TIP120B and NANOS2. Interacts with EBF1. Interacts in an RNA-independent manner with BICC1 (via KH domains).

The protein localises to the nucleus. It is found in the cytoplasm. It localises to the P-body. Functionally, component of the CCR4-NOT complex which is one of the major cellular mRNA deadenylases and is linked to various cellular processes including bulk mRNA degradation, miRNA-mediated repression, translational repression during translational initiation and general transcription regulation. Additional complex functions may be a consequence of its influence on mRNA expression. May be involved in metabolic regulation; may be involved in recruitment of the CCR4-NOT complex to deadenylation target mRNAs involved in energy metabolism. Involved in mitotic progression and regulation of the spindle assembly checkpoint by regulating the stability of MAD1L1 mRNA. Can repress transcription and may link the CCR4-NOT complex to transcriptional regulation; the repressive function may involve histone deacetylases. Involved in the maintenance of embryonic stem (ES) cell identity; prevents their differentiation towards extraembryonic trophectoderm lineages. This chain is CCR4-NOT transcription complex subunit 3 (Cnot3), found in Mus musculus (Mouse).